We begin with the raw amino-acid sequence, 340 residues long: Dof zinc finger protein DOF2.2 (340 aa).

Residues 12–33 (PPINWPQSANPNNHPHHHQLQE) are disordered. The segment at 94–148 (LKCPRCDSANTKFCYFNNYNLTQPRHFCKACRRYWTRGGALRNVPVGGGCRRNKK) adopts a Dof-type zinc-finger fold. Residues C96, C99, C121, and C124 each coordinate Zn(2+). Disordered regions lie at residues 138–180 (PVGG…TSNV) and 301–340 (GNISRPVSGLTSPGNQSNQYWTGQGLPGSSSNDHHHQHLM). The span at 151–165 (SGNSKSSSSSQNKQS) shows a compositional bias: low complexity. Composition is skewed to polar residues over residues 166 to 180 (TSMVNATSPTNTSNV) and 309 to 331 (GLTSPGNQSNQYWTGQGLPGSSS).

It localises to the nucleus. Functionally, transcription factor that binds specifically to a 5'-AA[AG]G-3' consensus core sequence. In Arabidopsis thaliana (Mouse-ear cress), this protein is Dof zinc finger protein DOF2.2 (DOF2.2).